A 196-amino-acid polypeptide reads, in one-letter code: Interferon lambda-3 (196 aa).

Positions 1-21 (MTGDCMPVLVLMAAVLTVTGA) are cleaved as a signal peptide. 3 disulfides stabilise this stretch: Cys37/Cys136, Cys71/Cys169, and Cys188/Cys195.

The protein belongs to the lambda interferon family.

The protein resides in the secreted. Its function is as follows. Cytokine with antiviral, antitumour and immunomodulatory activities. Plays a critical role in the antiviral host defense, predominantly in the epithelial tissues. Acts as a ligand for the heterodimeric class II cytokine receptor composed of IL10RB and IFNLR1, and receptor engagement leads to the activation of the JAK/STAT signaling pathway resulting in the expression of IFN-stimulated genes (ISG), which mediate the antiviral state. Has a restricted receptor distribution and therefore restricted targets: is primarily active in epithelial cells and this cell type-selective action is because of the epithelial cell-specific expression of its receptor IFNLR1. Seems not to be essential for early virus-activated host defense in vaginal infection, but plays an important role in Toll-like receptor (TLR)-induced antiviral defense. Plays a significant role in the antiviral immune defense in the intestinal epithelium. Exerts an immunomodulatory effect by up-regulating MHC class I antigen expression. This chain is Interferon lambda-3 (IFNL3), found in Homo sapiens (Human).